A 341-amino-acid polypeptide reads, in one-letter code: Ras association domain-containing protein 6 (341 aa).

Phosphoserine is present on serine 155. Residues tyrosine 190–alanine 278 form the Ras-associating domain. Residues valine 285 to lysine 332 form the SARAH domain.

Interacts with MOAP1. Interaction with activated KRAS is still a matter of debate.

Its function is as follows. Involved in the induction of apoptosis. May act as a Ras effector protein. May suppress the serum-induced basal levels of NF-kappa-B. The protein is Ras association domain-containing protein 6 (Rassf6) of Rattus norvegicus (Rat).